A 321-amino-acid polypeptide reads, in one-letter code: Phospho-N-acetylmuramoyl-pentapeptide-transferase (321 aa).

10 consecutive transmembrane segments (helical) span residues 4-24, 51-71, 75-95, 109-129, 139-159, 173-193, 195-215, 222-242, 247-267, and 297-317; these read MVWA…WLIP, TMGG…TVGF, SGVL…DDYI, QKFT…VYGI, GFEV…LLIV, GLAA…ASAG, SDVT…FLFF, MFMG…LALL, LILP…ILQV, and VVYT…LLAM.

It belongs to the glycosyltransferase 4 family. MraY subfamily. The cofactor is Mg(2+).

It localises to the cell membrane. It carries out the reaction UDP-N-acetyl-alpha-D-muramoyl-L-alanyl-gamma-D-glutamyl-meso-2,6-diaminopimeloyl-D-alanyl-D-alanine + di-trans,octa-cis-undecaprenyl phosphate = di-trans,octa-cis-undecaprenyl diphospho-N-acetyl-alpha-D-muramoyl-L-alanyl-D-glutamyl-meso-2,6-diaminopimeloyl-D-alanyl-D-alanine + UMP. It participates in cell wall biogenesis; peptidoglycan biosynthesis. In terms of biological role, catalyzes the initial step of the lipid cycle reactions in the biosynthesis of the cell wall peptidoglycan: transfers peptidoglycan precursor phospho-MurNAc-pentapeptide from UDP-MurNAc-pentapeptide onto the lipid carrier undecaprenyl phosphate, yielding undecaprenyl-pyrophosphoryl-MurNAc-pentapeptide, known as lipid I. The polypeptide is Phospho-N-acetylmuramoyl-pentapeptide-transferase (Heliobacterium modesticaldum (strain ATCC 51547 / Ice1)).